Here is a 563-residue protein sequence, read N- to C-terminus: Rhotekin (563 aa).

At Arg14 the chain carries Omega-N-methylarginine. Positions 17–98 constitute an REM-1 domain; that stretch reads ALEMEFKRGR…LQRRKEAQVL (82 aa). Ser30 and Ser106 each carry phosphoserine. Residues 96 to 116 are disordered; it reads QVLGKTSRRPSDSGPPAERSP. Asymmetric dimethylarginine is present on Arg230. Residue Ser232 is modified to Phosphoserine. Residues 309–416 form the PH domain; that stretch reads QPTASGTLRV…WMEALWQLFF (108 aa). Positions 518–563 are disordered; it reads TFSLDAVPPDHSPRARSVAPLPPQRSPRTRGLCSKGQPRTWLQSPV. A phosphoserine mark is found at Ser520, Ser529, and Ser543.

Interacts via its C-terminal region with the TAX1BP3 PDZ domain. This interaction facilitates Rho-mediated activation of the c-Fos serum response element (SRE). Interacts with SEPT9. Specifically binds to GTP-bound RHOA, RHOB and RHOC and inhibits their GTPase activity. In terms of tissue distribution, highly expressed in prostate, moderately in kidney, heart, brain, spleen, testis, placenta, small intestine, pancreas, skeletal muscle and peripheral blood leukocytes, and weakly in ovary, colon and thymus. Weakly expressed in all normal cell lines tested. Overexpressed in various cancer cell lines.

Its function is as follows. Mediates Rho signaling to activate NF-kappa-B and may confer increased resistance to apoptosis to cells in gastric tumorigenesis. May play a novel role in the organization of septin structures. The protein is Rhotekin of Homo sapiens (Human).